A 1092-amino-acid polypeptide reads, in one-letter code: Isoleucine--tRNA ligase (1092 aa).

The 'HIGH' region motif lies at 53–63 (PFANGLPHYGH). The 'KMSKS' region motif lies at 613–617 (KLSKR). Position 616 (K616) interacts with ATP.

This sequence belongs to the class-I aminoacyl-tRNA synthetase family. IleS type 2 subfamily. As to quaternary structure, monomer. It depends on Zn(2+) as a cofactor.

The protein localises to the cytoplasm. The enzyme catalyses tRNA(Ile) + L-isoleucine + ATP = L-isoleucyl-tRNA(Ile) + AMP + diphosphate. Its function is as follows. Catalyzes the attachment of isoleucine to tRNA(Ile). As IleRS can inadvertently accommodate and process structurally similar amino acids such as valine, to avoid such errors it has two additional distinct tRNA(Ile)-dependent editing activities. One activity is designated as 'pretransfer' editing and involves the hydrolysis of activated Val-AMP. The other activity is designated 'posttransfer' editing and involves deacylation of mischarged Val-tRNA(Ile). The polypeptide is Isoleucine--tRNA ligase (Rickettsia peacockii (strain Rustic)).